A 619-amino-acid polypeptide reads, in one-letter code: TOX high mobility group box family member 4 (619 aa).

Disordered regions lie at residues 155 to 227 (LSLG…QKPV) and 306 to 335 (DPVPQSQTPSPPPVTAADPASPAPASTESP). At Thr-176 the chain carries Phosphothreonine. Phosphoserine occurs at positions 178 and 182. A compositionally biased stretch (basic and acidic residues) spans 183–193 (LHEDGVDDFRR). The segment covering 208 to 218 (KQKAPKKRKKK) has biased composition (basic residues). Positions 213 to 218 (KKRKKK) match the Nuclear localization signal motif. Residues 223-291 (PQKPVSAYAL…EYLKALAAYK (69 aa)) constitute a DNA-binding region (HMG box). At Thr-313 the chain carries Phosphothreonine. Ser-315 carries the post-translational modification Phosphoserine. Positions 320–335 (TAADPASPAPASTESP) are enriched in low complexity. Arg-479 carries the asymmetric dimethylarginine modification. 6 positions are modified to phosphoserine: Ser-531, Ser-548, Ser-550, Ser-558, Ser-560, and Ser-565.

In terms of assembly, component of the PNUTS-PP1 phosphatase complex, composed of PPP1R10/PNUTS, TOX4, WDR82 and PPP1CA or PPP1CB or PPP1CC. Interacts with PPP1R10/PNUTS. Interacts with FOXO1 and CREB1 (increased by cAMP); FOXO1 and CREB1 are required for full induction of TOX4-dependent activity and the interactions are inhibited by insulin.

It is found in the nucleus. It localises to the chromosome. Its activity is regulated as follows. In liver, recruited to target gene promoters following treatment with dexamethasone and cAMP. Binding is decreased in presence of insulin. Transcription factor that modulates cell fate reprogramming from the somatic state to the pluripotent and neuronal fate. In liver, controls the expression of hormone-regulated gluconeogenic genes such as G6PC1 and PCK1. This regulation is independent of the insulin receptor activation. Also acts as a regulatory component of protein phosphatase 1 (PP1) complexes. Component of the PNUTS-PP1 protein phosphatase complex, a PP1 complex that regulates RNA polymerase II transcription pause-release. PNUTS-PP1 also plays a role in the control of chromatin structure and cell cycle progression during the transition from mitosis into interphase. The sequence is that of TOX high mobility group box family member 4 from Mus musculus (Mouse).